The chain runs to 975 residues: Cation-chloride cotransporter 1 (975 aa).

Disordered stretches follow at residues 1–29 (MDSGDIEEAGGNGEEEFRSGPRLGGSKYR) and 104–124 (EQIQAPSSPRDGEDISITQGH). Over 1–132 (MDSGDIEEAG…GHPKPPALKM (132 aa)) the chain is Cytoplasmic. The chain crosses the membrane as a helical span at residues 133–153 (GTMMGVFVPCLQNILGIIYYI). The Extracellular portion of the chain corresponds to 154 to 167 (RFTWIVGMAGIGQG). A helical membrane pass occupies residues 168–188 (LVLVFLCGLCTFLTTISLSAI). Topologically, residues 189–214 (ATNGAMKGGGPYYLIGRALGPEVGIS) are cytoplasmic. The chain crosses the membrane as a helical span at residues 215 to 235 (IGLCFFLGNAVAGALYVLGAV). Residues 236 to 273 (ETFLKAFPAAGIFRETITKVNGTAVSESIQSPNSHDLQ) lie on the Extracellular side of the membrane. N256 carries an N-linked (GlcNAc...) asparagine glycan. A helical membrane pass occupies residues 274–294 (VYGIVVTILLCFIVFGGVKMI). The Cytoplasmic portion of the chain corresponds to 295 to 296 (NR). A helical transmembrane segment spans residues 297–317 (VAPAFLVPVLLSIFCIFIGIF). Residues 318-359 (LAKTDDPDNGITGLRLKSFKDNWGSAYQMTNDAGIPDPTGGT) lie on the Extracellular side of the membrane. Residues 360–380 (YWSFNELVGLFFPAVTGIMAG) form a helical membrane-spanning segment. The Cytoplasmic portion of the chain corresponds to 381–398 (SNRSASLKDTQKSIPVGT). A helical membrane pass occupies residues 399 to 419 (LAATLTTTSLYLISVLFFGAV). The Extracellular segment spans residues 420–434 (ATRDKLLTDRLLTAT). The chain crosses the membrane as a helical span at residues 435 to 455 (IAWPFPAIVHVGIILSTLGAA). The Cytoplasmic segment spans residues 456–490 (LQSLTGAPRLLAAIANDDILPILNYFKVADTSEPH). A helical membrane pass occupies residues 491-511 (IATLFTAFICIGCVVIGNLDL). Topologically, residues 512–515 (ITPT) are extracellular. A helical membrane pass occupies residues 516–536 (VTMFYLLCYSGVNLSCFLLDL). Topologically, residues 537–544 (LDAPSWRP) are cytoplasmic. A helical membrane pass occupies residues 545–565 (RWKYHHWSLSFVGASLCIVIM). Over 566-571 (FLISWS) the chain is Extracellular. The chain crosses the membrane as a helical span at residues 572–592 (FTVVAIALASLIYKYVGLKGK). Residues 593–975 (AGDWGDGFKS…YHRDVVTLFT (383 aa)) lie on the Cytoplasmic side of the membrane.

The protein belongs to the SLC12A transporter family. As to expression, expressed in young seedlings cotyledon tips, plant vasculature, root tips and axillary buds. Expressed in root vascular strand in the pericycle and other parenchyma cells bordering xylem vessels. Expressed in the xylem/symplast boundaries of rosette stems, rosette leaves and cauline leaves. Expressed in stipules, trichomes and hydathodes. Expressed in pollen grains.

The protein resides in the membrane. Functionally, cation/chloride cotransporter that mediates potassium-chloride and sodium-chloride cotransports. Involved in plant development and Cl(-) homeostasis. May be involved in long distance Cl(-) transport. Does not function as an H(+)-dependent cotransporter. The polypeptide is Cation-chloride cotransporter 1 (CCC1) (Arabidopsis thaliana (Mouse-ear cress)).